The primary structure comprises 196 residues: Probable calcium-binding protein CML32 (196 aa).

3 EF-hand domains span residues 30-65 (LNAVRLRRVFDLFDRNGDGEITVDELAQALDALGLV), 121-156 (DEEEEMREAFKVFDVDGDGFISASELQEVLKKLGLP), and 159-194 (GSLATVREMICNVDRNSDGRVDFGEFKSMMQGITVW). Ca(2+) is bound by residues Asp-43, Asn-45, Asp-47, Glu-49, Glu-54, Asp-134, Asp-136, Asp-138, Glu-145, Asp-172, Asn-174, Asp-176, Arg-178, and Glu-183.

In terms of biological role, potential calcium sensor. The protein is Probable calcium-binding protein CML32 (CML32) of Oryza sativa subsp. japonica (Rice).